We begin with the raw amino-acid sequence, 103 residues long: Pyrimidine/purine nucleoside phosphorylase (103 aa).

The protein belongs to the nucleoside phosphorylase PpnP family.

It carries out the reaction a purine D-ribonucleoside + phosphate = a purine nucleobase + alpha-D-ribose 1-phosphate. It catalyses the reaction adenosine + phosphate = alpha-D-ribose 1-phosphate + adenine. The catalysed reaction is cytidine + phosphate = cytosine + alpha-D-ribose 1-phosphate. The enzyme catalyses guanosine + phosphate = alpha-D-ribose 1-phosphate + guanine. It carries out the reaction inosine + phosphate = alpha-D-ribose 1-phosphate + hypoxanthine. It catalyses the reaction thymidine + phosphate = 2-deoxy-alpha-D-ribose 1-phosphate + thymine. The catalysed reaction is uridine + phosphate = alpha-D-ribose 1-phosphate + uracil. The enzyme catalyses xanthosine + phosphate = alpha-D-ribose 1-phosphate + xanthine. Its function is as follows. Catalyzes the phosphorolysis of diverse nucleosides, yielding D-ribose 1-phosphate and the respective free bases. Can use uridine, adenosine, guanosine, cytidine, thymidine, inosine and xanthosine as substrates. Also catalyzes the reverse reactions. In Nocardia farcinica (strain IFM 10152), this protein is Pyrimidine/purine nucleoside phosphorylase.